The primary structure comprises 210 residues: Inner membrane-spanning protein YciB (210 aa).

6 helical membrane-spanning segments follow: residues 19 to 39, 53 to 73, 78 to 98, 115 to 135, 148 to 168, and 175 to 195; these read LVLE…GDWL, IFIA…VSWI, LPMM…LTLW, LFGA…GYVF, KLTI…EIVW, and FWVA…TLAQ.

It belongs to the YciB family.

It is found in the cell inner membrane. Its function is as follows. Plays a role in cell envelope biogenesis, maintenance of cell envelope integrity and membrane homeostasis. The sequence is that of Inner membrane-spanning protein YciB from Sinorhizobium fredii (strain NBRC 101917 / NGR234).